The chain runs to 1129 residues: Regulator of nonsense transcripts 1 (1129 aa).

A sufficient for interaction with RENT2 region spans residues methionine 1–glutamate 415. 2 positions are modified to phosphoserine: serine 10 and serine 31. Residues threonine 39–alanine 70 form a disordered region. Residues glycine 52–alanine 69 are compositionally biased toward gly residues. One can recognise a Upf1 CH-rich domain in the interval threonine 115–asparagine 272. 12 residues coordinate Zn(2+): cysteine 123, cysteine 126, cysteine 137, serine 140, cysteine 145, histidine 155, histidine 159, cysteine 165, cysteine 183, cysteine 186, cysteine 209, and cysteine 213. The C3H stretch occupies residues cysteine 123–histidine 155. The CC/SHH/C stretch occupies residues cysteine 137–cysteine 165. Residues cysteine 183–cysteine 213 are C4. ATP-binding positions include glutamine 486 and glycine 506–threonine 510. Serine 565 is subject to Phosphoserine. ATP is bound by residues glutamine 676, tyrosine 713, and glutamate 844. Serine 956 carries the post-translational modification Phosphoserine. Disordered stretches follow at residues phenylalanine 1009 to glutamine 1058 and serine 1073 to aspartate 1096. Arginine 1019 carries the post-translational modification Omega-N-methylarginine. Residues lysine 1025–asparagine 1034 are compositionally biased toward basic residues. Positions proline 1041–glutamine 1058 are enriched in polar residues. Residues serine 1073 to proline 1086 show a composition bias toward low complexity. Serine 1089, serine 1107, serine 1110, and serine 1127 each carry phosphoserine. Short sequence motifs ([ST]-Q motif) lie at residues serine 1089–glutamine 1090 and serine 1107–glutamine 1108. The disordered stretch occupies residues serine 1110–tyrosine 1129.

This sequence belongs to the DNA2/NAM7 helicase family. In terms of assembly, found in a post-splicing messenger ribonucleoprotein (mRNP) complex. Associates with the exon junction complex (EJC). Associates with the SGM1C complex; is phosphorylated by the complex kinase component SGM1. Part of a complex composed of SMG1, DHX34 and UPF1; within the complex DHX34 acts as a scaffolding protein to facilitate SMG1 phosphorylation of UPF1. Interacts with UPF2. Interacts with UPF3A and UPF3B. Interacts with EST1A. Interacts with SLBP. Interacts (when hyperphosphorylated) with PNRC2. Interacts with AGO1 and AGO2. Interacts with GSPT2. Interacts with isoform 1 and isoform 5 of ADAR/ADAR1. Interacts with SMG7. Interacts with ZC3H12A; this interaction occurs in a mRNA translationally active- and termination-dependent manner and is essential for ZC3H12A-mediated degradation of target mRNAs. Interacts with CPSF6. Interacts with MOV10; the interaction is direct and RNA-dependent. Interacts with SHFL; the interaction increases in the presence of RNA. Interacts with UPF2 and DDX4; interactions are mediated by TDRD6. Interacts with DHX34 and PABPC1/PABP1; the interactions are RNA-independent. Interacts with RBM46. As to quaternary structure, (Microbial infection) Interacts with human T-cell leukemia virus 1/HTLV-1 protein Tax; this interaction inhibits the host nonsense-mediated mRNA decay (NMD). In terms of processing, phosphorylated by SMG1; required for formation of mRNA surveillance complexes. As to expression, ubiquitous.

The protein resides in the cytoplasm. Its subcellular location is the P-body. It is found in the nucleus. The protein localises to the perinuclear region. The enzyme catalyses ATP + H2O = ADP + phosphate + H(+). RNA-dependent helicase required for nonsense-mediated decay (NMD) of aberrant mRNAs containing premature stop codons and modulates the expression level of normal mRNAs. Is recruited to mRNAs upon translation termination and undergoes a cycle of phosphorylation and dephosphorylation; its phosphorylation appears to be a key step in NMD. Recruited by release factors to stalled ribosomes together with the SMG1C protein kinase complex to form the transient SURF (SMG1-UPF1-eRF1-eRF3) complex. In EJC-dependent NMD, the SURF complex associates with the exon junction complex (EJC) (located 50-55 or more nucleotides downstream from the termination codon) through UPF2 and allows the formation of an UPF1-UPF2-UPF3 surveillance complex which is believed to activate NMD. Phosphorylated UPF1 is recognized by EST1B/SMG5, SMG6 and SMG7 which are thought to provide a link to the mRNA degradation machinery involving exonucleolytic and endonucleolytic pathways, and to serve as adapters to protein phosphatase 2A (PP2A), thereby triggering UPF1 dephosphorylation and allowing the recycling of NMD factors. UPF1 can also activate NMD without UPF2 or UPF3, and in the absence of the NMD-enhancing downstream EJC indicative for alternative NMD pathways. Plays a role in replication-dependent histone mRNA degradation at the end of phase S; the function is independent of UPF2. For the recognition of premature termination codons (PTC) and initiation of NMD a competitive interaction between UPF1 and PABPC1 with the ribosome-bound release factors is proposed. The ATPase activity of UPF1 is required for disassembly of mRNPs undergoing NMD. Together with UPF2 and dependent on TDRD6, mediates the degradation of mRNA harboring long 3'UTR by inducing the NMD machinery. Also capable of unwinding double-stranded DNA and translocating on single-stranded DNA. This chain is Regulator of nonsense transcripts 1, found in Homo sapiens (Human).